We begin with the raw amino-acid sequence, 636 residues long: DNA gyrase subunit B (636 aa).

Residues 421 to 535 (TELFIVEGDS…QGRVYIALPP (115 aa)) enclose the Toprim domain. Glutamate 427, aspartate 500, and aspartate 502 together coordinate Mg(2+).

Belongs to the type II topoisomerase GyrB family. As to quaternary structure, heterotetramer, composed of two GyrA and two GyrB chains. In the heterotetramer, GyrA contains the active site tyrosine that forms a transient covalent intermediate with DNA, while GyrB binds cofactors and catalyzes ATP hydrolysis. Requires Mg(2+) as cofactor. Mn(2+) is required as a cofactor. The cofactor is Ca(2+).

It localises to the cytoplasm. The catalysed reaction is ATP-dependent breakage, passage and rejoining of double-stranded DNA.. A type II topoisomerase that negatively supercoils closed circular double-stranded (ds) DNA in an ATP-dependent manner to modulate DNA topology and maintain chromosomes in an underwound state. Negative supercoiling favors strand separation, and DNA replication, transcription, recombination and repair, all of which involve strand separation. Also able to catalyze the interconversion of other topological isomers of dsDNA rings, including catenanes and knotted rings. Type II topoisomerases break and join 2 DNA strands simultaneously in an ATP-dependent manner. In Thermotoga maritima (strain ATCC 43589 / DSM 3109 / JCM 10099 / NBRC 100826 / MSB8), this protein is DNA gyrase subunit B.